Reading from the N-terminus, the 168-residue chain is Cell division inhibitor SulA (168 aa).

Residues 106–112 form a ftsZ binding region; the sequence is ALLTGNY. Residues 161 to 168 are lon protease binding; the sequence is KIHSYLYH.

Belongs to the SulA family. As to quaternary structure, interacts with FtsZ. Post-translationally, is rapidly cleaved and degraded by the Lon protease once DNA damage is repaired.

Its function is as follows. Component of the SOS system and an inhibitor of cell division. Accumulation of SulA causes rapid cessation of cell division and the appearance of long, non-septate filaments. In the presence of GTP, binds a polymerization-competent form of FtsZ in a 1:1 ratio, thus inhibiting FtsZ polymerization and therefore preventing it from participating in the assembly of the Z ring. This mechanism prevents the premature segregation of damaged DNA to daughter cells during cell division. This Yersinia pseudotuberculosis serotype O:1b (strain IP 31758) protein is Cell division inhibitor SulA.